The chain runs to 393 residues: MTTIGTPLTPKATKVMMLGSGELGKEVVIELQRLGVEVIAVDRYANAPAQQVAHRAYTISMLDGEALKALVEKEKPDYIVPEVEAIATATLVELEQAGFTVIPTAKATQLTMNREGIRRLAAEELGLPTSNYQFVDNFDDFKRAVEKIGIPCVVKPIMSSSGHGQSILKSVEQIPSAWEYAQQGGRAGAGRVIVEGFVKFDYEITLLTVRHVHGTSFLAPIGHIQIDGDYRESWQPQAMSAVALEKAQAIAEKITGALGGRGIFGVEMFVCGDEVIFNEVSPRPHDTGMVTLISQELSEFALHARAILGLPIPDITLISPSASKAIVVEGKSTQVVFGQLAEVLAEPHTNLRLFGKGEVDGHRRMGVILARDISVEKALEKARRAYDKLEIAL.

Residues 22-23 (EL) and Glu-82 contribute to the N(1)-(5-phospho-beta-D-ribosyl)glycinamide site. ATP-binding positions include Arg-114, Lys-155, 160–165 (SSGHGQ), 195–198 (EGFV), and Glu-203. Residues 119 to 308 (RLAAEELGLP…EFALHARAIL (190 aa)) enclose the ATP-grasp domain. 2 residues coordinate Mg(2+): Glu-267 and Glu-279. N(1)-(5-phospho-beta-D-ribosyl)glycinamide contacts are provided by residues Asp-286, Lys-356, and 363–364 (RR).

Belongs to the PurK/PurT family. Homodimer.

It catalyses the reaction N(1)-(5-phospho-beta-D-ribosyl)glycinamide + formate + ATP = N(2)-formyl-N(1)-(5-phospho-beta-D-ribosyl)glycinamide + ADP + phosphate + H(+). The protein operates within purine metabolism; IMP biosynthesis via de novo pathway; N(2)-formyl-N(1)-(5-phospho-D-ribosyl)glycinamide from N(1)-(5-phospho-D-ribosyl)glycinamide (formate route): step 1/1. Its function is as follows. Involved in the de novo purine biosynthesis. Catalyzes the transfer of formate to 5-phospho-ribosyl-glycinamide (GAR), producing 5-phospho-ribosyl-N-formylglycinamide (FGAR). Formate is provided by PurU via hydrolysis of 10-formyl-tetrahydrofolate. The polypeptide is Formate-dependent phosphoribosylglycinamide formyltransferase (Pasteurella multocida (strain Pm70)).